A 677-amino-acid chain; its full sequence is Methionine--tRNA ligase (677 aa).

Residues 15–25 carry the 'HIGH' region motif; that stretch reads PYANGSIHLGH. 4 residues coordinate Zn(2+): Cys146, Cys149, Cys159, and Cys162. Positions 333–337 match the 'KMSKS' region motif; it reads KMSKS. ATP is bound at residue Lys336. The region spanning 575–677 is the tRNA-binding domain; it reads DFAKIDLRVA…DGAKPGQQVK (103 aa).

This sequence belongs to the class-I aminoacyl-tRNA synthetase family. MetG type 1 subfamily. In terms of assembly, homodimer. Zn(2+) serves as cofactor.

The protein resides in the cytoplasm. The enzyme catalyses tRNA(Met) + L-methionine + ATP = L-methionyl-tRNA(Met) + AMP + diphosphate. Is required not only for elongation of protein synthesis but also for the initiation of all mRNA translation through initiator tRNA(fMet) aminoacylation. The chain is Methionine--tRNA ligase from Salmonella choleraesuis (strain SC-B67).